The sequence spans 104 residues: Putative Fis-like DNA-binding protein (104 aa).

The H-T-H motif DNA-binding region spans 80 to 99; that stretch reads QTKASELLGLNRGTLRKKLK.

This sequence belongs to the transcriptional regulatory Fis family.

The sequence is that of Putative Fis-like DNA-binding protein from Pseudomonas aeruginosa (strain ATCC 15692 / DSM 22644 / CIP 104116 / JCM 14847 / LMG 12228 / 1C / PRS 101 / PAO1).